The primary structure comprises 98 residues: Co-chaperonin GroES (98 aa).

Belongs to the GroES chaperonin family. Heptamer of 7 subunits arranged in a ring. Interacts with the chaperonin GroEL.

It localises to the cytoplasm. Functionally, together with the chaperonin GroEL, plays an essential role in assisting protein folding. The GroEL-GroES system forms a nano-cage that allows encapsulation of the non-native substrate proteins and provides a physical environment optimized to promote and accelerate protein folding. GroES binds to the apical surface of the GroEL ring, thereby capping the opening of the GroEL channel. The polypeptide is Co-chaperonin GroES (Clavibacter michiganensis subsp. michiganensis (strain NCPPB 382)).